Here is a 469-residue protein sequence, read N- to C-terminus: UDP-N-acetylmuramate--L-alanine ligase (469 aa).

112 to 118 is an ATP binding site; that stretch reads GTHGKTT.

This sequence belongs to the MurCDEF family.

The protein resides in the cytoplasm. It catalyses the reaction UDP-N-acetyl-alpha-D-muramate + L-alanine + ATP = UDP-N-acetyl-alpha-D-muramoyl-L-alanine + ADP + phosphate + H(+). The protein operates within cell wall biogenesis; peptidoglycan biosynthesis. Functionally, cell wall formation. This Herminiimonas arsenicoxydans protein is UDP-N-acetylmuramate--L-alanine ligase.